A 183-amino-acid chain; its full sequence is UPF0316 protein BcerKBAB4_3093 (183 aa).

Transmembrane regions (helical) follow at residues 6–26, 32–52, and 58–78; these read LIFVLQIIYVPTLTIRTILLV, SAAGVGLLEGAIYIVSLGIVF, and WMNIVAYVIGFSAGLLLGGYI.

The protein belongs to the UPF0316 family.

The protein localises to the cell membrane. The chain is UPF0316 protein BcerKBAB4_3093 from Bacillus mycoides (strain KBAB4) (Bacillus weihenstephanensis).